The following is a 47-amino-acid chain: Delta-actitoxin-Axm1d (47 aa).

Cystine bridges form between Cys4-Cys44, Cys6-Cys34, and Cys27-Cys45.

It belongs to the sea anemone sodium channel inhibitory toxin family. Type I subfamily.

The protein resides in the secreted. The protein localises to the nematocyst. Its function is as follows. Binds specifically to voltage-gated sodium channels (Nav), thereby delaying their inactivation during signal transduction. Thus it strongly stimulates mammalian cardiac muscle contraction. This is Delta-actitoxin-Axm1d from Anthopleura xanthogrammica (Giant green sea anemone).